Consider the following 481-residue polypeptide: tRNA-2-methylthio-N(6)-dimethylallyladenosine synthase (481 aa).

One can recognise an MTTase N-terminal domain in the interval 24 to 140 (RKLFIESYGC…LPNLINEVEE (117 aa)). Residues Cys-33, Cys-69, Cys-103, Cys-178, Cys-182, and Cys-185 each coordinate [4Fe-4S] cluster. A Radical SAM core domain is found at 164 to 410 (QSNGVSAFVS…VDLQQKHSKQ (247 aa)). Positions 413–476 (NSVIGTTVEV…SATLIGEPIG (64 aa)) constitute a TRAM domain.

Belongs to the methylthiotransferase family. MiaB subfamily. In terms of assembly, monomer. The cofactor is [4Fe-4S] cluster.

The protein resides in the cytoplasm. The enzyme catalyses N(6)-dimethylallyladenosine(37) in tRNA + (sulfur carrier)-SH + AH2 + 2 S-adenosyl-L-methionine = 2-methylsulfanyl-N(6)-dimethylallyladenosine(37) in tRNA + (sulfur carrier)-H + 5'-deoxyadenosine + L-methionine + A + S-adenosyl-L-homocysteine + 2 H(+). In terms of biological role, catalyzes the methylthiolation of N6-(dimethylallyl)adenosine (i(6)A), leading to the formation of 2-methylthio-N6-(dimethylallyl)adenosine (ms(2)i(6)A) at position 37 in tRNAs that read codons beginning with uridine. This is tRNA-2-methylthio-N(6)-dimethylallyladenosine synthase from Christiangramia forsetii (strain DSM 17595 / CGMCC 1.15422 / KT0803) (Gramella forsetii).